Reading from the N-terminus, the 479-residue chain is Isoprimeverose transporter (479 aa).

11 helical membrane passes run 54 to 74 (MFFY…LFLV), 102 to 122 (PYWL…FTVP), 131 to 151 (VWAY…NIPI), 174 to 194 (FMGT…VAYF), 205 to 225 (WFMV…IVFA), 253 to 273 (WPWV…QTRS), 289 to 309 (LASF…ITPW), 321 to 341 (LMGM…SKAL), 348 to 368 (VGTI…AVML), 397 to 417 (FGMG…GYVA), and 431 to 451 (MNYV…LLFY).

Belongs to the sodium:galactoside symporter (TC 2.A.2) family.

It localises to the cell membrane. Functionally, involved in the metabolism of isoprimeverose. Transports isoprimeverose into the cell. Transport is driven by the proton motive force generated by malolactic fermentation. Cannot transport D-xylose. This chain is Isoprimeverose transporter, found in Lactiplantibacillus pentosus (Lactobacillus pentosus).